The sequence spans 211 residues: Histidine biosynthesis bifunctional protein HisIE (211 aa).

The phosphoribosyl-AMP cyclohydrolase stretch occupies residues 1 to 122; it reads MSFKAAEVSS…DAQEESQMVW (122 aa). The segment at 123-211 is phosphoribosyl-ATP pyrophosphohydrolase; that stretch reads LHQLEQLLAA…VVNKLKERHK (89 aa).

In the N-terminal section; belongs to the PRA-CH family. This sequence in the C-terminal section; belongs to the PRA-PH family.

It localises to the cytoplasm. It carries out the reaction 1-(5-phospho-beta-D-ribosyl)-ATP + H2O = 1-(5-phospho-beta-D-ribosyl)-5'-AMP + diphosphate + H(+). It catalyses the reaction 1-(5-phospho-beta-D-ribosyl)-5'-AMP + H2O = 1-(5-phospho-beta-D-ribosyl)-5-[(5-phospho-beta-D-ribosylamino)methylideneamino]imidazole-4-carboxamide. Its pathway is amino-acid biosynthesis; L-histidine biosynthesis; L-histidine from 5-phospho-alpha-D-ribose 1-diphosphate: step 2/9. The protein operates within amino-acid biosynthesis; L-histidine biosynthesis; L-histidine from 5-phospho-alpha-D-ribose 1-diphosphate: step 3/9. This is Histidine biosynthesis bifunctional protein HisIE from Vibrio parahaemolyticus serotype O3:K6 (strain RIMD 2210633).